Here is a 359-residue protein sequence, read N- to C-terminus: Peptide methionine sulfoxide reductase MsrA/MsrB (359 aa).

Positions 36 to 189 (RVIYLAGGCF…PSGYCHIDLK (154 aa)) are peptide methionine sulfoxide reductase A. Cys44 is a catalytic residue. In terms of domain architecture, MsrB spans 206–329 (DEVLKKKLTK…NSAALRFIPL (124 aa)). Catalysis depends on Cys318, which acts as the Nucleophile.

This sequence in the N-terminal section; belongs to the MsrA Met sulfoxide reductase family. In the C-terminal section; belongs to the MsrB Met sulfoxide reductase family.

It catalyses the reaction L-methionyl-[protein] + [thioredoxin]-disulfide + H2O = L-methionyl-(S)-S-oxide-[protein] + [thioredoxin]-dithiol. The catalysed reaction is [thioredoxin]-disulfide + L-methionine + H2O = L-methionine (S)-S-oxide + [thioredoxin]-dithiol. It carries out the reaction L-methionyl-[protein] + [thioredoxin]-disulfide + H2O = L-methionyl-(R)-S-oxide-[protein] + [thioredoxin]-dithiol. Functionally, has an important function as a repair enzyme for proteins that have been inactivated by oxidation. Catalyzes the reversible oxidation-reduction of methionine sulfoxide in proteins to methionine. This Helicobacter pylori (strain ATCC 700392 / 26695) (Campylobacter pylori) protein is Peptide methionine sulfoxide reductase MsrA/MsrB (msrAB).